Here is a 141-residue protein sequence, read N- to C-terminus: Large-conductance mechanosensitive channel (141 aa).

Transmembrane regions (helical) follow at residues 16 to 36 (VIDL…VDSV), 40 to 60 (LIMP…MFIV), and 86 to 106 (GNFL…FLMV).

The protein belongs to the MscL family. As to quaternary structure, homopentamer.

The protein localises to the cell inner membrane. Channel that opens in response to stretch forces in the membrane lipid bilayer. May participate in the regulation of osmotic pressure changes within the cell. This Cupriavidus necator (strain ATCC 17699 / DSM 428 / KCTC 22496 / NCIMB 10442 / H16 / Stanier 337) (Ralstonia eutropha) protein is Large-conductance mechanosensitive channel.